Here is a 98-residue protein sequence, read N- to C-terminus: Co-chaperonin GroES (98 aa).

This sequence belongs to the GroES chaperonin family. As to quaternary structure, heptamer of 7 subunits arranged in a ring. Interacts with the chaperonin GroEL.

It is found in the cytoplasm. Functionally, together with the chaperonin GroEL, plays an essential role in assisting protein folding. The GroEL-GroES system forms a nano-cage that allows encapsulation of the non-native substrate proteins and provides a physical environment optimized to promote and accelerate protein folding. GroES binds to the apical surface of the GroEL ring, thereby capping the opening of the GroEL channel. The chain is Co-chaperonin GroES from Brucella abortus (strain S19).